A 975-amino-acid chain; its full sequence is E3 ubiquitin-protein ligase BRE1A (975 aa).

The interval 1–37 is disordered; that stretch reads MSGIGSKRAAGEPGTSVPPEKKTAVEDSGTTVETIKL. Residue K21 is modified to N6-acetyllysine. S41 bears the Phosphoserine mark. Residues 43 to 90 adopt a coiled-coil conformation; it reads TEELDIRTLQTKNRKLAEMLDQRQAIEDELREHIEKLERRQATDDASL. The tract at residues 125 to 155 is disordered; sequence KALVVPEPEPDSDSNQERKDDRERGEGQEPA. 2 positions are modified to phosphoserine: S136 and S138. Residues 139 to 151 show a composition bias toward basic and acidic residues; that stretch reads NQERKDDRERGEG. Coiled coils occupy residues 168 to 375 and 429 to 898; these read EEME…EEVV and SLHK…TTKK. An N6-acetyllysine mark is found at K348 and K510. A disordered region spans residues 507 to 622; the sequence is DLNKTRLRSG…GKHDDGRKKE (116 aa). Residue S522 is modified to Phosphoserine. Residues 527-540 show a composition bias toward basic and acidic residues; the sequence is EDPKDEPAELKQDS. Polar residues predominate over residues 543 to 552; that stretch reads LATQSAASKA. Basic and acidic residues predominate over residues 558 to 622; sequence NEIKSKRDEE…GKHDDGRKKE (65 aa). A Phosphoserine modification is found at S562. Residues 922–961 form an RING-type zinc finger; it reads CPCCNMRKKDAVLTKCFHVFCFECVKTRYDTRQRKCPKCN.

It belongs to the BRE1 family. As to quaternary structure, component of the RNF20/40 complex (also known as BRE1 complex) probably composed of 2 copies of RNF20/BRE1A and 2 copies of RNF40/BRE1B. Interacts with UBE2E1/UBCH6. Interacts with p53/TP53 and WAC. Interacts with PAF1; the interaction mediates the association of the PAF1 and RNF20/40 complexes which is a prerequsite for recruitment of UBE2A/B. Interacts with PA2G4. Interacts with FBXL19.

It localises to the nucleus. It carries out the reaction S-ubiquitinyl-[E2 ubiquitin-conjugating enzyme]-L-cysteine + [acceptor protein]-L-lysine = [E2 ubiquitin-conjugating enzyme]-L-cysteine + N(6)-ubiquitinyl-[acceptor protein]-L-lysine.. It functions in the pathway protein modification; protein ubiquitination. Its function is as follows. Component of the RNF20/40 E3 ubiquitin-protein ligase complex that mediates monoubiquitination of 'Lys-120' of histone H2B (H2BK120ub1). H2BK120ub1 gives a specific tag for epigenetic transcriptional activation and is also prerequisite for histone H3 'Lys-4' and 'Lys-79' methylation (H3K4me and H3K79me, respectively). It thereby plays a central role in histone code and gene regulation. The RNF20/40 complex forms a H2B ubiquitin ligase complex in cooperation with the E2 enzyme UBE2A or UBE2B; reports about the cooperation with UBE2E1/UBCH are contradictory. Required for transcriptional activation of Hox genes. Recruited to the MDM2 promoter, probably by being recruited by p53/TP53, and thereby acts as a transcriptional coactivator. Mediates the polyubiquitination of PA2G4 leading to its proteasome-mediated degradation. In Bos taurus (Bovine), this protein is E3 ubiquitin-protein ligase BRE1A (RNF20).